Reading from the N-terminus, the 282-residue chain is tRNA pseudouridine synthase A (282 aa).

D61 (nucleophile) is an active-site residue. Y119 lines the substrate pocket.

The protein belongs to the tRNA pseudouridine synthase TruA family. Homodimer.

The enzyme catalyses uridine(38/39/40) in tRNA = pseudouridine(38/39/40) in tRNA. In terms of biological role, formation of pseudouridine at positions 38, 39 and 40 in the anticodon stem and loop of transfer RNAs. In Nostoc sp. (strain PCC 7120 / SAG 25.82 / UTEX 2576), this protein is tRNA pseudouridine synthase A.